The primary structure comprises 32 residues: Jingzhaotoxin F4-32.60 (32 aa).

3 disulfide bridges follow: Cys2/Cys17, Cys9/Cys22, and Cys16/Cys29. Asp31 is modified (aspartic acid 1-amide).

Belongs to the neurotoxin 10 (Hwtx-1) family. 30 (Jztx-14) subfamily. Post-translationally, amidated as well as non-amidated forms are found in the venom. Expressed by the venom gland.

The protein localises to the secreted. In terms of biological role, probable ion channel inhibitor. This is Jingzhaotoxin F4-32.60 from Chilobrachys guangxiensis (Chinese earth tiger tarantula).